We begin with the raw amino-acid sequence, 146 residues long: Snaclec anticoagulant protein subunit B (146 aa).

The signal sequence occupies residues 1–23 (MGRFIFVSFGLLVLFLSLSGTAA). The region spanning 24–146 (DCPSDWSSYE…IANFVCEFQA (123 aa)) is the C-type lectin domain. 3 cysteine pairs are disulfide-bonded: C25-C36, C53-C142, and C119-C134. S64, Q66, and E70 together coordinate Ca(2+). E143 is a Ca(2+) binding site.

This sequence belongs to the snaclec family. As to quaternary structure, heterodimer with subunit A of agkisacutacin or AaACP; disulfide-linked. As to expression, expressed by the venom gland.

Its subcellular location is the secreted. Its function is as follows. Anticoagulant protein which binds to the gamma-carboxyglutamic acid-domain regions of factors IX and factor X in the presence of calcium with a 1 to 1 stoichiometry. Also inhibits platelet aggregation by binding to platelet glycoprotein Ibalpha (GP1BA) and functioning as a blocker of vWF. Is devoid of hemorrhagic and lethal activities. Possesses antithrombotic and thrombolytic activities. Also hydrolyzes the Aalpha-chain of fibrinogen. Does not affect the Bbeta-chain and the gamma chain. This is Snaclec anticoagulant protein subunit B from Deinagkistrodon acutus (Hundred-pace snake).